The primary structure comprises 328 residues: Spermatogenesis- and oogenesis-specific basic helix-loop-helix-containing protein 1 (328 aa).

Residues 53-104 form the bHLH domain; the sequence is SCLRRNVISERERRKRMSLSCERLRALLPQFDGRREDMASVLEMSVQFLRLA. The segment at 290-328 is disordered; it reads EAGSALGSDVDDGTSFLLTAGPSSWPGEWGPGFRAGPPA. A compositionally biased stretch (low complexity) spans 310 to 321; the sequence is GPSSWPGEWGPG.

In terms of assembly, forms both hetero- and homodimers with SOHLH2.

The protein localises to the cytoplasm. The protein resides in the nucleus. Functionally, transcription regulator of both male and female germline differentiation. Suppresses genes involved in spermatogonial stem cells maintenance, and induces genes important for spermatogonial differentiation. Coordinates oocyte differentiation without affecting meiosis I. This Homo sapiens (Human) protein is Spermatogenesis- and oogenesis-specific basic helix-loop-helix-containing protein 1 (SOHLH1).